Consider the following 209-residue polypeptide: MRAAAISMPRLNKMPGMFFSASPKDSKEPSHSLLDDNKQKKRPKTFGMDMKAYLRSMIPHLESGMKSSKSKDILSAEEVMQWSQSLEKLLANQMGQNVFGKFLKSEFSEENIEFWLACEDYKKTETDLLHNKAEHIYKAFVHSDAVKQINIDFHTRESTAKKIKTPTPTCFDEAQKVIYALMEKDSYPRFLKSNIYLNLLNDLQANTLK.

The interval 18 to 42 (FFSASPKDSKEPSHSLLDDNKQKKR) is disordered. Over residues 24 to 38 (KDSKEPSHSLLDDNK) the composition is skewed to basic and acidic residues. An RGS domain is found at 85-200 (SLEKLLANQM…LKSNIYLNLL (116 aa)).

Interacts with GNAI1 and GNAQ. As to expression, expressed in multiple tissues.

It is found in the cell membrane. The protein localises to the cytoplasm. Its subcellular location is the cytosol. In terms of biological role, regulates G protein-coupled receptor signaling cascades, including signaling downstream of the N-formylpeptide chemoattractant receptors and leukotriene receptors. Inhibits B cell chemotaxis toward CXCL12. Inhibits signal transduction by increasing the GTPase activity of G protein alpha subunits, thereby driving them into their inactive GDP-bound form. This Rattus norvegicus (Rat) protein is Regulator of G-protein signaling 1 (Rgs1).